Reading from the N-terminus, the 667-residue chain is Probable potassium transport system protein Kup (667 aa).

The next 12 membrane-spanning stretches (helical) occupy residues 16–36 (GFII…LYTM), 58–78 (VSLI…LIAL), 101–121 (WLII…ALTP), 146–166 (TNVI…QRFG), 167–187 (TGVI…VLGI), 221–241 (IFIL…YSDL), 253–273 (WPFV…WILA), 294–314 (VYLV…LISG), 343–363 (LYIP…VLYF), 373–393 (YGLA…YYLI), 399–419 (PLLA…FFLA), and 424–444 (FMHG…VMVI).

Belongs to the HAK/KUP transporter (TC 2.A.72) family.

Its subcellular location is the cell membrane. The catalysed reaction is K(+)(in) + H(+)(in) = K(+)(out) + H(+)(out). Transport of potassium into the cell. Likely operates as a K(+):H(+) symporter. This is Probable potassium transport system protein Kup from Streptococcus equi subsp. equi (strain 4047).